A 663-amino-acid polypeptide reads, in one-letter code: Protein MICRORCHIDIA 6 (663 aa).

Positions 1-77 (MSHDRSVNVS…PADDAGVTSS (77 aa)) are disordered. Polar residues predominate over residues 49–62 (SVGQSAGQSSTSVV). Positions 552–559 (KRKEHPDS) match the Nuclear localization signal motif. Positions 614–659 (DRKVRSQNLEVKAMNLRSELENYKSEYERLMVELQALDLVKDEHRR) form a coiled coil.

Belongs to the MORC ATPase protein family. In terms of assembly, homodimer and heterodimers with MORC1/CRT1 and MORC2. Interacts directly with SUVH9. Component of an RNA-directed DNA methylation (RdDM) complex that contains at least MORC6, MORC1/CRT1, MORC2, SWI3D and SUVH9. Stimulated by interaction with DMS3. Interacts with IDN2, SWI3B, SWI3C and SWI3D. Mg(2+) serves as cofactor. The cofactor is Mn(2+).

Its subcellular location is the nucleus. With respect to regulation, stimulated by DMS3. Its function is as follows. Involved in RNA-directed DNA methylation (RdDM) as a component of the RdDM machinery and required for gene silencing. Together with SUVH2 and SUVH9, regulates the silencing of some transposable elements (TEs). Exhibits ATPase activity. May also be involved in the regulation of chromatin architecture/condensation to maintain gene silencing. Binds DNA/RNA in a non-specific manner and exhibits endonuclease activity. Probably involved in DNA repair. Positive regulator of defense against the oomycete Hyaloperonospora arabidopsidis (Hpa). This Arabidopsis thaliana (Mouse-ear cress) protein is Protein MICRORCHIDIA 6.